Here is a 131-residue protein sequence, read N- to C-terminus: Aspartate 1-decarboxylase (131 aa).

The Schiff-base intermediate with substrate; via pyruvic acid role is filled by S25. S25 is subject to Pyruvic acid (Ser). A substrate-binding site is contributed by T57. Y58 (proton donor) is an active-site residue. 73–75 (GAA) lines the substrate pocket.

Belongs to the PanD family. Heterooctamer of four alpha and four beta subunits. Pyruvate serves as cofactor. Post-translationally, is synthesized initially as an inactive proenzyme, which is activated by self-cleavage at a specific serine bond to produce a beta-subunit with a hydroxyl group at its C-terminus and an alpha-subunit with a pyruvoyl group at its N-terminus.

Its subcellular location is the cytoplasm. The catalysed reaction is L-aspartate + H(+) = beta-alanine + CO2. The protein operates within cofactor biosynthesis; (R)-pantothenate biosynthesis; beta-alanine from L-aspartate: step 1/1. Functionally, catalyzes the pyruvoyl-dependent decarboxylation of aspartate to produce beta-alanine. In Anaeromyxobacter sp. (strain K), this protein is Aspartate 1-decarboxylase.